A 100-amino-acid polypeptide reads, in one-letter code: Toxin ParE3 (100 aa).

This sequence belongs to the RelE toxin family.

In terms of biological role, toxic component of a type II toxin-antitoxin (TA) system. Its toxic effect is neutralized by coexpression with cognate antitoxin ParD3 but no other ParD or RelB antitoxin. This chain is Toxin ParE3 (parE3), found in Caulobacter vibrioides (strain ATCC 19089 / CIP 103742 / CB 15) (Caulobacter crescentus).